The following is a 233-amino-acid chain: MDNHKVLILLPESLEIQEHIAFISTIFQKQYDETESIARDVQWKTKYYETTLDLYIDTYDVLQEWVNDFVSDECKELRDVISGIIFVFKDEDHKPPVECLKNLIDERIEDFTAKFFIGCYFNENVIEEDELYELNSDLLVQNFEIVNWFDKPDPSMDKVGSERIKEIIDVHPWLSHPETLKKNQGQINISPIDLDSFMTKLEQAKERYQTFDDSKEAELFIEKIIDELSDMIV.

It belongs to the IRC6 family.

Involved in gross chromosomal rearrangements (GCRs) and telomere healing. The polypeptide is Increased recombination centers protein 6 (IRC6) (Kluyveromyces lactis (strain ATCC 8585 / CBS 2359 / DSM 70799 / NBRC 1267 / NRRL Y-1140 / WM37) (Yeast)).